A 107-amino-acid chain; its full sequence is Ferredoxin CarAc (107 aa).

A Rieske domain is found at 6–102 (LKVCAASDMQ…VEVKEGEVYV (97 aa)). [2Fe-2S] cluster is bound by residues Cys-46, His-48, Cys-65, and His-68.

Monomer. Carbazole 1,9a-dioxygenase complex consists of a terminal oxygenase component CarAa, a ferredoxin reductase component CarAd and a ferredoxin component CarAc. Requires [2Fe-2S] cluster as cofactor.

In terms of biological role, part of the multicomponent carbazole 1,9a-dioxygenase (CARDO), that converts carbazole (CAR) into 2-aminobiphenyl-2,3-diol. Acts as a mediator in the electron transfer from CarAd to CarAa. This is Ferredoxin CarAc (carAc) from Metapseudomonas resinovorans (Pseudomonas resinovorans).